The following is a 101-amino-acid chain: Small ribosomal subunit protein uS14 (101 aa).

Belongs to the universal ribosomal protein uS14 family. In terms of assembly, part of the 30S ribosomal subunit. Contacts proteins S3 and S10.

Binds 16S rRNA, required for the assembly of 30S particles and may also be responsible for determining the conformation of the 16S rRNA at the A site. This is Small ribosomal subunit protein uS14 from Ruegeria sp. (strain TM1040) (Silicibacter sp.).